The following is a 248-amino-acid chain: MKKLLAVFCAGAFVSTSVFAAIPPGNDVTTKPDLYYLKNSQAIDSLALLPPPPEVGSILFLNDQAMYEKGRLLRNTERGEQAAKDADLAAGGVANAFSEAFGYPITEKDAPEIHKLLTNMIEDAGDLATRSAKEKYMRIRPFAFYGVATCNTKDQDKLSKNGSYPSGHTAIGWASALVLSEINPENQDKILKRGYELGQSRVICGYHWQSDVDAARIVASGAVATLHSNPEFQKQLQKAKDEFAKLKK.

The signal sequence occupies residues 1–20 (MKKLLAVFCAGAFVSTSVFA).

This sequence belongs to the class A bacterial acid phosphatase family.

It localises to the periplasm. The enzyme catalyses a phosphate monoester + H2O = an alcohol + phosphate. This is Non-specific acid phosphatase (phoN) from Providencia stuartii.